The chain runs to 501 residues: Aldehyde dehydrogenase 1A1 (501 aa).

S2 is modified (N-acetylserine). N6-acetyllysine is present on residues K91 and K128. Residues 167–170 (IPWN), 193–196 (KPAE), 226–227 (GP), and 246–247 (GS) each bind NAD(+). K252 is subject to N6-acetyllysine. E269 acts as the Proton acceptor in catalysis. An NAD(+)-binding site is contributed by 269-271 (ELG). C303 functions as the Nucleophile in the catalytic mechanism. Positions 336 to 501 (LTQGINQGPQ…VAMKISQKNS (166 aa)) are mediates interaction with PRMT3. At T337 the chain carries Phosphothreonine. 349-353 (EQHDK) contributes to the NAD(+) binding site. Residues K353 and K367 each carry the N6-acetyllysine modification. Residue 400–402 (EIF) coordinates NAD(+). K410 bears the N6-acetyllysine mark. S413 bears the Phosphoserine mark. K419, K435, and K495 each carry N6-acetyllysine.

This sequence belongs to the aldehyde dehydrogenase family. In terms of assembly, homotetramer. Interacts with PRMT3; the interaction is direct, inhibits ALDH1A1 aldehyde dehydrogenase activity and is independent of the methyltransferase activity of PRMT3. The N-terminus is blocked most probably by acetylation. As to expression, strongly expressed in kidney, lung, testis, intestine, stomach, and trachea, but weakly in the liver.

Its subcellular location is the cytoplasm. The protein localises to the cytosol. The protein resides in the cell projection. It is found in the axon. The enzyme catalyses an aldehyde + NAD(+) + H2O = a carboxylate + NADH + 2 H(+). The catalysed reaction is all-trans-retinal + NAD(+) + H2O = all-trans-retinoate + NADH + 2 H(+). It carries out the reaction 9-cis-retinal + NAD(+) + H2O = 9-cis-retinoate + NADH + 2 H(+). It catalyses the reaction 11-cis-retinal + NAD(+) + H2O = 11-cis-retinoate + NADH + 2 H(+). The enzyme catalyses 13-cis-retinal + NAD(+) + H2O = 13-cis-retinoate + NADH + 2 H(+). The catalysed reaction is 3-deoxyglucosone + NAD(+) + H2O = 2-dehydro-3-deoxy-D-gluconate + NADH + 2 H(+). It carries out the reaction (E)-4-hydroxynon-2-enal + NAD(+) + H2O = (E)-4-hydroxynon-2-enoate + NADH + 2 H(+). It catalyses the reaction malonaldehyde + NAD(+) + H2O = 3-oxopropanoate + NADH + 2 H(+). The enzyme catalyses hexanal + NAD(+) + H2O = hexanoate + NADH + 2 H(+). The catalysed reaction is propanal + NAD(+) + H2O = propanoate + NADH + 2 H(+). It carries out the reaction acetaldehyde + NAD(+) + H2O = acetate + NADH + 2 H(+). It catalyses the reaction benzaldehyde + NAD(+) + H2O = benzoate + NADH + 2 H(+). The enzyme catalyses 4-aminobutanal + NAD(+) + H2O = 4-aminobutanoate + NADH + 2 H(+). Its pathway is cofactor metabolism; retinol metabolism. With respect to regulation, inhibited by chloral hydrate. Functionally, cytosolic dehydrogenase that catalyzes the irreversible oxidation of a wide range of aldehydes to their corresponding carboxylic acid. Functions downstream of retinol dehydrogenases and catalyzes the oxidation of retinaldehyde into retinoic acid, the second step in the oxidation of retinol/vitamin A into retinoic acid. This pathway is crucial to control the levels of retinol and retinoic acid, two important molecules which excess can be teratogenic and cytotoxic. Also oxidizes aldehydes resulting from lipid peroxidation like (E)-4-hydroxynon-2-enal/HNE, malonaldehyde and hexanal that form protein adducts and are highly cytotoxic. By participating for instance to the clearance of (E)-4-hydroxynon-2-enal/HNE in the lens epithelium prevents the formation of HNE-protein adducts and lens opacification. Functions also downstream of fructosamine-3-kinase in the fructosamine degradation pathway by catalyzing the oxidation of 3-deoxyglucosone, the carbohydrate product of fructosamine 3-phosphate decomposition, which is itself a potent glycating agent that may react with lysine and arginine side-chains of proteins. Also has an aminobutyraldehyde dehydrogenase activity and is probably part of an alternative pathway for the biosynthesis of GABA/4-aminobutanoate in midbrain, thereby playing a role in GABAergic synaptic transmission. The sequence is that of Aldehyde dehydrogenase 1A1 from Rattus norvegicus (Rat).